The following is a 90-amino-acid chain: UPF0335 protein Smed_2680 (90 aa).

It belongs to the UPF0335 family.

In Sinorhizobium medicae (strain WSM419) (Ensifer medicae), this protein is UPF0335 protein Smed_2680.